The chain runs to 335 residues: Fructose-1,6-bisphosphatase class 1 1 (335 aa).

The Mg(2+) site is built by Glu92, Asp114, Leu116, and Asp117. Substrate contacts are provided by residues 117 to 120 (DGSS), Asn209, and Lys275. Glu281 provides a ligand contact to Mg(2+).

This sequence belongs to the FBPase class 1 family. As to quaternary structure, homotetramer. Mg(2+) serves as cofactor.

The protein resides in the cytoplasm. The catalysed reaction is beta-D-fructose 1,6-bisphosphate + H2O = beta-D-fructose 6-phosphate + phosphate. It participates in carbohydrate biosynthesis; gluconeogenesis. This Polaromonas naphthalenivorans (strain CJ2) protein is Fructose-1,6-bisphosphatase class 1 1.